A 343-amino-acid chain; its full sequence is Methionine import ATP-binding protein MetN 1 (343 aa).

Residues 2–241 (IKLSNITKVF…PKTPLAQKFI (240 aa)) enclose the ABC transporter domain. 38-45 (GASGAGKS) serves as a coordination point for ATP.

This sequence belongs to the ABC transporter superfamily. Methionine importer (TC 3.A.1.24) family. In terms of assembly, the complex is composed of two ATP-binding proteins (MetN), two transmembrane proteins (MetI) and a solute-binding protein (MetQ).

The protein resides in the cell inner membrane. It carries out the reaction L-methionine(out) + ATP + H2O = L-methionine(in) + ADP + phosphate + H(+). It catalyses the reaction D-methionine(out) + ATP + H2O = D-methionine(in) + ADP + phosphate + H(+). In terms of biological role, part of the ABC transporter complex MetNIQ involved in methionine import. Responsible for energy coupling to the transport system. The polypeptide is Methionine import ATP-binding protein MetN 1 (Salmonella choleraesuis (strain SC-B67)).